A 321-amino-acid chain; its full sequence is MDLLFLGTSAGVPTKARNVSATAVIEASGSHWYLVDCGEGTQHQLLHTPLSVRDLRAIFITHVHGDHCFGLPGLLASAGMSGRTAPLDLVLPAALHDWVRLSLAASDSFLPFELRLLAVEQLGEWRSDTLAVSTVQLSHRVPSVAFVFTELNPEPRLDVQRLDAEGIPRGPLWGELAKGLTVEHAGRMLHGRDYLRASRPARRVIVCGDNDNPELLAEAAKDVDVLVHEATFTQPIIARTGVSFGHSSAAAVARFAETAGVRNLVLTHFSARYQPDPRRSPCIDEVREEAQVHYSGNLTLAQDLQRYHIGRDGCLGRVTGI.

Positions 62, 64, 66, 67, 139, 209, and 268 each coordinate Zn(2+). Asp-66 functions as the Proton acceptor in the catalytic mechanism.

It belongs to the RNase Z family. As to quaternary structure, homodimer. The cofactor is Zn(2+).

The enzyme catalyses Endonucleolytic cleavage of RNA, removing extra 3' nucleotides from tRNA precursor, generating 3' termini of tRNAs. A 3'-hydroxy group is left at the tRNA terminus and a 5'-phosphoryl group is left at the trailer molecule.. Its function is as follows. Zinc phosphodiesterase, which displays some tRNA 3'-processing endonuclease activity. Probably involved in tRNA maturation, by removing a 3'-trailer from precursor tRNA. This is Ribonuclease Z from Pseudomonas putida (strain W619).